A 173-amino-acid chain; its full sequence is Acireductone dioxygenase 1 (173 aa).

4 residues coordinate Fe(2+): H96, H98, E102, and H140. Residues H96, H98, E102, and H140 each coordinate Ni(2+).

It belongs to the acireductone dioxygenase (ARD) family. Monomer. The cofactor is Fe(2+). It depends on Ni(2+) as a cofactor.

The catalysed reaction is 1,2-dihydroxy-5-(methylsulfanyl)pent-1-en-3-one + O2 = 3-(methylsulfanyl)propanoate + CO + formate + 2 H(+). It carries out the reaction 1,2-dihydroxy-5-(methylsulfanyl)pent-1-en-3-one + O2 = 4-methylsulfanyl-2-oxobutanoate + formate + 2 H(+). It participates in amino-acid biosynthesis; L-methionine biosynthesis via salvage pathway; L-methionine from S-methyl-5-thio-alpha-D-ribose 1-phosphate: step 5/6. Catalyzes 2 different reactions between oxygen and the acireductone 1,2-dihydroxy-3-keto-5-methylthiopentene (DHK-MTPene) depending upon the metal bound in the active site. Fe-containing acireductone dioxygenase (Fe-ARD) produces formate and 2-keto-4-methylthiobutyrate (KMTB), the alpha-ketoacid precursor of methionine in the methionine recycle pathway. Ni-containing acireductone dioxygenase (Ni-ARD) produces methylthiopropionate, carbon monoxide and formate, and does not lie on the methionine recycle pathway. The polypeptide is Acireductone dioxygenase 1 (Pectobacterium atrosepticum (strain SCRI 1043 / ATCC BAA-672) (Erwinia carotovora subsp. atroseptica)).